We begin with the raw amino-acid sequence, 167 residues long: Nascent polypeptide-associated complex subunit beta (167 aa).

Disordered stretches follow at residues Met-1 to Asp-48 and Gln-133 to Glu-167. Residues Asn-25 to Lys-42 show a composition bias toward basic residues. Residues Gly-45 to Val-110 form the NAC-A/B domain. The segment covering Asp-148–Asp-161 has biased composition (acidic residues).

This sequence belongs to the NAC-beta family. As to quaternary structure, part of the nascent polypeptide-associated complex (NAC), consisting of egd2 and egd1. NAC associates with ribosomes via egd1.

Its subcellular location is the cytoplasm. It localises to the nucleus. In terms of biological role, component of the nascent polypeptide-associated complex (NAC), a dynamic component of the ribosomal exit tunnel, protecting the emerging polypeptides from interaction with other cytoplasmic proteins to ensure appropriate nascent protein targeting. The NAC complex also promotes mitochondrial protein import by enhancing productive ribosome interactions with the outer mitochondrial membrane and blocks the inappropriate interaction of ribosomes translating non-secretory nascent polypeptides with translocation sites in the membrane of the endoplasmic reticulum. EGD1 may act as a transcription factor that exert a negative effect on the expression of several genes that are transcribed by RNA polymerase II. The protein is Nascent polypeptide-associated complex subunit beta (egd1) of Aspergillus terreus (strain NIH 2624 / FGSC A1156).